The primary structure comprises 404 residues: Nicotinate phosphoribosyltransferase (404 aa).

Position 225 is a phosphohistidine; by autocatalysis (H225).

The protein belongs to the NAPRTase family. Post-translationally, transiently phosphorylated on a His residue during the reaction cycle. Phosphorylation strongly increases the affinity for substrates and increases the rate of nicotinate D-ribonucleotide production. Dephosphorylation regenerates the low-affinity form of the enzyme, leading to product release.

The enzyme catalyses nicotinate + 5-phospho-alpha-D-ribose 1-diphosphate + ATP + H2O = nicotinate beta-D-ribonucleotide + ADP + phosphate + diphosphate. It functions in the pathway cofactor biosynthesis; NAD(+) biosynthesis; nicotinate D-ribonucleotide from nicotinate: step 1/1. Functionally, catalyzes the synthesis of beta-nicotinate D-ribonucleotide from nicotinate and 5-phospho-D-ribose 1-phosphate at the expense of ATP. This chain is Nicotinate phosphoribosyltransferase, found in Methanosarcina acetivorans (strain ATCC 35395 / DSM 2834 / JCM 12185 / C2A).